The primary structure comprises 473 residues: Photosystem II CP43 reaction center protein (473 aa).

Residues 1-14 (MKTLYSLRRFYPVE) constitute a propeptide that is removed on maturation. T15 is modified (N-acetylthreonine). T15 carries the phosphothreonine modification. 5 consecutive transmembrane segments (helical) span residues 69–93 (LFEV…PHLA), 134–155 (LLGP…KDRN), 178–200 (KALY…RRIT), 255–275 (KPFA…LSYS), and 291–312 (WFNN…ASQA). E367 contributes to the [CaMn4O5] cluster binding site. Residues 447 to 471 (RARAAAAGFEKGIDRDFEPVLSMTP) traverse the membrane as a helical segment.

It belongs to the PsbB/PsbC family. PsbC subfamily. PSII is composed of 1 copy each of membrane proteins PsbA, PsbB, PsbC, PsbD, PsbE, PsbF, PsbH, PsbI, PsbJ, PsbK, PsbL, PsbM, PsbT, PsbX, PsbY, PsbZ, Psb30/Ycf12, at least 3 peripheral proteins of the oxygen-evolving complex and a large number of cofactors. It forms dimeric complexes. Binds multiple chlorophylls and provides some of the ligands for the Ca-4Mn-5O cluster of the oxygen-evolving complex. It may also provide a ligand for a Cl- that is required for oxygen evolution. PSII binds additional chlorophylls, carotenoids and specific lipids. serves as cofactor.

The protein resides in the plastid. It is found in the chloroplast thylakoid membrane. One of the components of the core complex of photosystem II (PSII). It binds chlorophyll and helps catalyze the primary light-induced photochemical processes of PSII. PSII is a light-driven water:plastoquinone oxidoreductase, using light energy to abstract electrons from H(2)O, generating O(2) and a proton gradient subsequently used for ATP formation. The chain is Photosystem II CP43 reaction center protein from Illicium oligandrum (Star anise).